The chain runs to 190 residues: Small ribosomal subunit protein eS7B (190 aa).

Residue serine 2 is modified to N-acetylserine. Phosphoserine occurs at positions 10 and 31. Glycyl lysine isopeptide (Lys-Gly) (interchain with G-Cter in ubiquitin) cross-links involve residues lysine 83 and lysine 84.

This sequence belongs to the eukaryotic ribosomal protein eS7 family. In terms of assembly, component of the small ribosomal subunit (SSU). Mature yeast ribosomes consist of a small (40S) and a large (60S) subunit. The 40S small subunit contains 1 molecule of ribosomal RNA (18S rRNA) and 33 different proteins (encoded by 57 genes). The large 60S subunit contains 3 rRNA molecules (25S, 5.8S and 5S rRNA) and 46 different proteins (encoded by 81 genes). Interacts with snoRNA U3. uS11 interacts with MPP10. Component of the ribosomal small subunit (SSU) processome composed of at least 40 protein subunits and snoRNA U3. N-terminally acetylated by acetyltransferase NatA. Post-translationally, ubiquitinated at Lys-83 and Lys-84 in response to stalled ribosomes, leading to activation of the No-Go Decay (NGD) pathway: first monoubiquitinated by MOT2/NOT4, followed by formation by HEL2 of 'Lys-63'-linked polyubiquitin chains on monoubiquitin.

The protein localises to the cytoplasm. It localises to the nucleus. The protein resides in the nucleolus. Functionally, component of the ribosome, a large ribonucleoprotein complex responsible for the synthesis of proteins in the cell. The small ribosomal subunit (SSU) binds messenger RNAs (mRNAs) and translates the encoded message by selecting cognate aminoacyl-transfer RNA (tRNA) molecules. The large subunit (LSU) contains the ribosomal catalytic site termed the peptidyl transferase center (PTC), which catalyzes the formation of peptide bonds, thereby polymerizing the amino acids delivered by tRNAs into a polypeptide chain. The nascent polypeptides leave the ribosome through a tunnel in the LSU and interact with protein factors that function in enzymatic processing, targeting, and the membrane insertion of nascent chains at the exit of the ribosomal tunnel. eS7 is involved in nucleolar processing of pre-18S ribosomal RNA and ribosome assembly. This chain is Small ribosomal subunit protein eS7B, found in Saccharomyces cerevisiae (strain ATCC 204508 / S288c) (Baker's yeast).